The chain runs to 1372 residues: Capping protein, Arp2/3 and myosin-I linker protein 3 (1372 aa).

Residues 126 to 151 (RGNADTPEGPRDTSPNSETSTSTTHS) are disordered. A compositionally biased stretch (low complexity) spans 138 to 151 (TSPNSETSTSTTHS). LRR repeat units follow at residues 244–264 (SLEE…QKLA), 274–295 (VLHA…SLSQ), 303–323 (GLTK…QALG), 335–357 (SLRY…NALY), 365–385 (ALVH…LGAL), 392–413 (HLTY…EAPP), 424–444 (TLSH…RALL), 455–475 (DLHL…ALQE), 482–501 (CVGS…LTLV), and 509–530 (SLKH…EEIL). 3 disordered regions span residues 865-900 (TLSD…ELGT), 970-1003 (KLRH…RQEN), and 1024-1372 (ESSS…PGTD). Residues 982–995 (PRTTPPGPGRPSMP) are compositionally biased toward pro residues. Residues 1040–1073 (SEAPLPPLQKKRRRGLFHFRRPRSFKGDRGPGSP) form a necessary for localization at the cell membrane region. Over residues 1048-1063 (QKKRRRGLFHFRRPRS) the composition is skewed to basic residues. Pro residues predominate over residues 1079–1098 (LPPPPPPPPTQESPPSPDPP). The segment covering 1099-1109 (SLGNNSSPCWS) has biased composition (low complexity). Basic and acidic residues-rich tracts occupy residues 1163 to 1177 (ERAK…REGP) and 1219 to 1229 (RRAEATWHIAE). Polar residues predominate over residues 1233 to 1244 (PNHSCQSPSPAS). Residues 1348–1361 (QSCDKLEPDRRRPP) are compositionally biased toward basic and acidic residues.

This sequence belongs to the CARMIL family. As to expression, widely expressed, with much higher levels in fetal tissues than in adult ones. Up-regulated in certain cancer tissues.

It localises to the cytoplasm. It is found in the cell membrane. In Homo sapiens (Human), this protein is Capping protein, Arp2/3 and myosin-I linker protein 3.